The primary structure comprises 730 residues: Pentatricopeptide repeat-containing protein At5g64320, mitochondrial (730 aa).

The N-terminal 18 residues, 1-18, are a transit peptide targeting the mitochondrion; that stretch reads MVMLARSKLALDVSRRSQ. PPR repeat units lie at residues 110–144, 145–175, 181–215, 216–250, 251–285, 286–320, 321–351, 352–387, 388–422, 423–457, 458–492, 493–527, 528–562, 563–597, 598–632, 633–667, and 668–702; these read SFDV…GIVF, KESL…MRNV, TFKS…KIPP, TLFT…GCVP, NSVI…GCVP, DAET…GFAP, DDIT…IPKP, EIVI…GIVP, DVCT…GCKP, NVYS…GLKP, NTVG…GCKP, DVYT…GVVA, NTVT…GSPL, DEIT…GHAP, SNIS…GSTP, DIVT…GIPP, and DTVT…GFVP.

This sequence belongs to the PPR family. P subfamily.

It localises to the mitochondrion. The protein is Pentatricopeptide repeat-containing protein At5g64320, mitochondrial of Arabidopsis thaliana (Mouse-ear cress).